A 320-amino-acid chain; its full sequence is Tyrosine recombinase Synpcc7942_B2651 (320 aa).

In terms of domain architecture, Core-binding (CB) spans 16 to 106 (VQDWDVLQML…ALKSLVRFSR (91 aa)). A Tyr recombinase domain is found at 127–313 (RDTTGTTPER…RQDFQGECTE (187 aa)). Catalysis depends on residues Arg-167, Lys-193, His-264, Arg-267, and His-291. Tyr-300 serves as the catalytic O-(3'-phospho-DNA)-tyrosine intermediate.

It belongs to the 'phage' integrase family.

It is found in the cytoplasm. Site-specific tyrosine recombinase, which acts by catalyzing the cutting and rejoining of the recombining DNA molecules. This Synechococcus elongatus (strain ATCC 33912 / PCC 7942 / FACHB-805) (Anacystis nidulans R2) protein is Tyrosine recombinase Synpcc7942_B2651.